A 342-amino-acid polypeptide reads, in one-letter code: DDB1- and CUL4-associated factor 7 (342 aa).

7 WD repeats span residues 6–52 (KRKE…LVGL), 60–100 (ICRN…VWRV), 108–150 (ECLL…IWGL), 165–206 (HVKT…MFDL), 213–252 (TIIYEDPQHHPLLRLCWNKQDPNYLATMAMDGMEVVILDV), 257–296 (TPVARLNNHRACVNGIAWAPHSSCHICTAADDHQALIWDI), and 303–342 (IEDPILAYTAEGEINNVQWASTQPDWIAICYNNCLEILRV).

The protein belongs to the WD repeat DCAF7 family. In terms of assembly, interacts with DYRK1A, DYRK1B and DIAPH1. Interacts with DDB1. Interacts with ZNF703. Interacts with human adenovirus 5 E1A protein.

It is found in the cytoplasm. The protein localises to the nucleus. It participates in protein modification; protein ubiquitination. Its function is as follows. Involved in craniofacial development. Acts upstream of the EDN1 pathway and is required for formation of the upper jaw equivalent, the palatoquadrate. The activity required for EDN1 pathway function differs between the first and second arches. Associates with DIAPH1 and controls GLI1 transcriptional activity. Could be involved in normal and disease skin development. May function as a substrate receptor for CUL4-DDB1 E3 ubiquitin-protein ligase complex. This is DDB1- and CUL4-associated factor 7 (DCAF7) from Homo sapiens (Human).